A 432-amino-acid polypeptide reads, in one-letter code: MVNTTIKTTKSQEVFAAAQNLMPGGVSSPVRAFKSVGGQPIVFDRVKGAYIWDVDGNQYIDYVGTWGPAICGHAHPEVIAALHEALEKGTSFGAPSTLENVLAEMVIDAVPSIEMVRFVNSGTEACMGVLRLMRAFTNRDKIIKFEGCYHGHADTFLVKAGSGVATLGLPDSPGVPKAATSTTLTAPYNDLESVKALFEENRDEIAGVILEPVVGNAGFIAPDAGFLEGLRELTHEYGALLVFDEVMTGFRIAYGGAQEKFGVTPDLTTLGKVIGGGLPVGAYGGRRDIMSMVAPAGPVYQAGTLSGNPLAMTAGIKTLELLQKPGTYDYLERITKKLADGLLQIAKETGHTACGGQISAMFGLFFTSGPVHNYEDAKKSDTAKFGRFHRGMLERGVYLAPSQFEAGFTSFAHTEEDIDQTLAIARDVMSSL.

The residue at position 272 (K272) is an N6-(pyridoxal phosphate)lysine.

Belongs to the class-III pyridoxal-phosphate-dependent aminotransferase family. HemL subfamily. Homodimer. The cofactor is pyridoxal 5'-phosphate.

It is found in the cytoplasm. It carries out the reaction (S)-4-amino-5-oxopentanoate = 5-aminolevulinate. Its pathway is porphyrin-containing compound metabolism; protoporphyrin-IX biosynthesis; 5-aminolevulinate from L-glutamyl-tRNA(Glu): step 2/2. The protein operates within porphyrin-containing compound metabolism; chlorophyll biosynthesis. The protein is Glutamate-1-semialdehyde 2,1-aminomutase of Nostoc punctiforme (strain ATCC 29133 / PCC 73102).